Here is a 213-residue protein sequence, read N- to C-terminus: LIM domain-containing protein PLIM2c (213 aa).

2 consecutive LIM zinc-binding domains span residues 9-69 (DKCK…LFKE) and 105-165 (DKCA…LFLE). The disordered stretch occupies residues 177–213 (ANHRRSTAEEDKTEPKEDEANPTEEETSDAAAEEHES). The span at 182 to 195 (STAEEDKTEPKEDE) shows a compositional bias: basic and acidic residues.

As to quaternary structure, interacts with F-actin. Exclusively expressed in pollen grains.

It localises to the cytoplasm. It is found in the cytoskeleton. Functionally, binds to actin filaments and promotes cross-linking into thick bundles. Has an actin-stabilizing activity. Associates predominantly with long and dynamic actin bundles in the shank of growing pollen tubes. The actin regulatory activities are inhibited by pH &gt; 6.8 and/or high [Ca(2+)]. The sequence is that of LIM domain-containing protein PLIM2c from Arabidopsis thaliana (Mouse-ear cress).